The following is a 427-amino-acid chain: uncharacterized protein (427 aa).

Belongs to the CAF1 family.

This is an uncharacterized protein from Schizosaccharomyces pombe (strain 972 / ATCC 24843) (Fission yeast).